The primary structure comprises 186 residues: Cell division protein ZapC (186 aa).

This sequence belongs to the ZapC family. In terms of assembly, interacts directly with FtsZ.

The protein resides in the cytoplasm. Contributes to the efficiency of the cell division process by stabilizing the polymeric form of the cell division protein FtsZ. Acts by promoting interactions between FtsZ protofilaments and suppressing the GTPase activity of FtsZ. The protein is Cell division protein ZapC of Musicola paradisiaca (strain Ech703) (Dickeya paradisiaca).